The chain runs to 46 residues: Mu-segestritoxin-Sf1b (46 aa).

4 disulfide bridges follow: cysteine 3-cysteine 19, cysteine 10-cysteine 22, cysteine 18-cysteine 42, and cysteine 24-cysteine 40. The tract at residues 31–33 (RPW) is keys region for toxin activity.

It belongs to the neurotoxin 16 (SFI) family. As to expression, expressed by the venom gland.

The protein resides in the secreted. Insecticidal toxin. Causes flaccid paralysis followed by death when injected into Heliothis virescens larvae. Does not induce any toxic effects when injected intravenously into adult mice at a dose of 1.25 mg/kg body weight. This chain is Mu-segestritoxin-Sf1b, found in Segestria florentina (Tube-web spider).